The sequence spans 268 residues: Magnesium dechelatase SGR1, chloroplastic (268 aa).

The transit peptide at 1-48 (MCSLSAIMLLPTKLKPAYSDKRSNSSSSSSLFFNNRRSKKKNQSIVPV) directs the protein to the chloroplast.

The protein belongs to the staygreen family. In terms of assembly, interacts with HCAR, the chlorophyll catabolic enzymes (CCEs) NYC1, PAO and RCCR, and the LHCII complex. Part of a SGR1-CCE-LHCII complex, which acts in chlorophyll breakdown. Expressed in roots, leaves, seeds, flowers, buds, petals, sepals and siliques.

Its subcellular location is the plastid. It localises to the chloroplast thylakoid membrane. It catalyses the reaction chlorophyll a + 2 H(+) = pheophytin a + Mg(2+). Its function is as follows. Magnesium chelatase involved in chlorophyll a degradation in the chlorophyll-protein complexes of photosystem I (PSI) and photosystem II (PSII). Contributes to the degradation of PSI and PSII in the thylakoid membranes. Required to trigger chlorophyll degradation during natural and dark-induced leaf senescence. Mediates chlorophyll degradation during embryo degreening. Recombinant SGR1 possesses high dechelating activity against chlorophyll a, very low activity against chlorophyllide a, and no activity against chlorophyll b. Magnesium dechelation of chlorophyll a by SGR1 activates chlorophyll b degradation by inducing the expression of NYC1, an enzyme involved in chlorophyll b degradation. This is Magnesium dechelatase SGR1, chloroplastic from Arabidopsis thaliana (Mouse-ear cress).